We begin with the raw amino-acid sequence, 274 residues long: Type II restriction enzyme HgiBI (274 aa).

This sequence belongs to the TdeIII type II restriction endonuclease family.

The enzyme catalyses Endonucleolytic cleavage of DNA to give specific double-stranded fragments with terminal 5'-phosphates.. Its function is as follows. A P subtype restriction enzyme that recognizes the double-stranded sequence 5'-GGWCC-3' and cleaves after G-1. This system is less active than isoschizomeric RM.HgiEI. The polypeptide is Type II restriction enzyme HgiBI (Herpetosiphon aurantiacus (Herpetosiphon giganteus)).